The sequence spans 340 residues: Ketol-acid reductoisomerase (NADP(+)) (340 aa).

Residues 1–183 (MAVTVYYDKD…GAGRTGIIET (183 aa)) enclose the KARI N-terminal Rossmann domain. Residues 26–29 (FGSQ), Lys-49, Ser-54, and 84–87 (DELQ) contribute to the NADP(+) site. The active site involves His-109. NADP(+) is bound at residue Gly-135. The KARI C-terminal knotted domain maps to 184–329 (TFKDETETDL…EKLRAMMPWI (146 aa)). Residues Asp-192, Glu-196, Glu-228, and Glu-232 each coordinate Mg(2+). Ser-253 contributes to the substrate binding site.

The protein belongs to the ketol-acid reductoisomerase family. Mg(2+) is required as a cofactor.

It carries out the reaction (2R)-2,3-dihydroxy-3-methylbutanoate + NADP(+) = (2S)-2-acetolactate + NADPH + H(+). It catalyses the reaction (2R,3R)-2,3-dihydroxy-3-methylpentanoate + NADP(+) = (S)-2-ethyl-2-hydroxy-3-oxobutanoate + NADPH + H(+). It functions in the pathway amino-acid biosynthesis; L-isoleucine biosynthesis; L-isoleucine from 2-oxobutanoate: step 2/4. Its pathway is amino-acid biosynthesis; L-valine biosynthesis; L-valine from pyruvate: step 2/4. Involved in the biosynthesis of branched-chain amino acids (BCAA). Catalyzes an alkyl-migration followed by a ketol-acid reduction of (S)-2-acetolactate (S2AL) to yield (R)-2,3-dihydroxy-isovalerate. In the isomerase reaction, S2AL is rearranged via a Mg-dependent methyl migration to produce 3-hydroxy-3-methyl-2-ketobutyrate (HMKB). In the reductase reaction, this 2-ketoacid undergoes a metal-dependent reduction by NADPH to yield (R)-2,3-dihydroxy-isovalerate. The polypeptide is Ketol-acid reductoisomerase (NADP(+)) (Campylobacter hominis (strain ATCC BAA-381 / DSM 21671 / CCUG 45161 / LMG 19568 / NCTC 13146 / CH001A)).